The sequence spans 166 residues: Large ribosomal subunit protein mL49 (166 aa).

The interval 54-77 (PTKIPEPPKHKHYPTPSGWQPPRD) is disordered.

The protein belongs to the mitochondrion-specific ribosomal protein mL49 family. As to quaternary structure, component of the mitochondrial ribosome large subunit (39S) which comprises a 16S rRNA and about 50 distinct proteins. Interacts with OXA1L.

It is found in the mitochondrion. The protein is Large ribosomal subunit protein mL49 (Mrpl49) of Mus musculus (Mouse).